The primary structure comprises 562 residues: F-box and WD repeat domain-containing 11-A (562 aa).

Residues 87-136 form a homodimerization domain D region; it reads GSFDKEKDLCIQLFDQWSESDQVEFVEHLIARMCHYQHGHINSYLKPMLQ. Positions 149-187 constitute an F-box domain; the sequence is DHIAENILSFLDARSLCSAELVCREWQRVISDGMLWKKL. WD repeat units lie at residues 256–295, 296–335, 336–375, 379–418, 419–458, 459–491, and 508–538; these read RSEN…CLKV, LTGH…VLNT, LIHH…DISL, LVGH…FVRT, LNGH…CLRV, LEGH…WDLQ, and LVEH…LIWD.

As to quaternary structure, self-associates. Component of the SCF(FBXW11) complex.

The protein localises to the cytoplasm. Its subcellular location is the nucleus. Its pathway is protein modification; protein ubiquitination. Its function is as follows. Substrate recognition component of a SCF (SKP1-CUL1-F-box protein) E3 ubiquitin-protein ligase complex which mediates the ubiquitination and subsequent proteasomal degradation of target proteins. Probably recognizes and binds to phosphorylated target proteins: the interaction with substrates requires the phosphorylation of the two serine residues in the substrates' destruction motif D-S-G-X(2,3,4)-S. SCF(FBXW11) mediates the ubiquitination of phosphorylated CTNNB1 and participates in Wnt signaling regulation. Participates in Wnt signaling regulation, and plays a role in eye and jaw development. SCF(FBXW11) plays a key role in NF-kappa-B activation by mediating ubiquitination of phosphorylated NFKBIA, leading to its degradation by the proteasome, thereby allowing the associated NF-kappa-B complex to translocate into the nucleus and to activate transcription. The sequence is that of F-box and WD repeat domain-containing 11-A from Danio rerio (Zebrafish).